A 616-amino-acid polypeptide reads, in one-letter code: tRNA uridine 5-carboxymethylaminomethyl modification enzyme MnmG (616 aa).

FAD-binding positions include 10–15 (GAGHAG), Val-122, and Ser-177. 271-285 (GPRYCPSIEDKVVRF) lines the NAD(+) pocket. Gln-368 is a binding site for FAD.

The protein belongs to the MnmG family. As to quaternary structure, homodimer. Heterotetramer of two MnmE and two MnmG subunits. Requires FAD as cofactor.

The protein resides in the cytoplasm. NAD-binding protein involved in the addition of a carboxymethylaminomethyl (cmnm) group at the wobble position (U34) of certain tRNAs, forming tRNA-cmnm(5)s(2)U34. This is tRNA uridine 5-carboxymethylaminomethyl modification enzyme MnmG from Malacoplasma penetrans (strain HF-2) (Mycoplasma penetrans).